The chain runs to 367 residues: tRNA pseudouridine synthase D (367 aa).

The active-site Nucleophile is the Asp80. Residues 156-316 (GIPNWFGEQR…LKQERRALRL (161 aa)) enclose the TRUD domain.

It belongs to the pseudouridine synthase TruD family.

It carries out the reaction uridine(13) in tRNA = pseudouridine(13) in tRNA. Its function is as follows. Responsible for synthesis of pseudouridine from uracil-13 in transfer RNAs. This is tRNA pseudouridine synthase D from Xanthomonas campestris pv. campestris (strain 8004).